Reading from the N-terminus, the 147-residue chain is Hemoglobin subunit beta (147 aa).

The region spanning 3 to 147 (EWTDKERSII…VVSALGKQYH (145 aa)) is the Globin domain. Residues histidine 64 and histidine 93 each contribute to the heme b site.

Belongs to the globin family. In terms of assembly, hb1 is a heterotetramer of two alpha chains and two beta chains. In terms of tissue distribution, red blood cells.

Involved in oxygen transport from gills to the various peripheral tissues. The polypeptide is Hemoglobin subunit beta (hbb) (Trematomus bernacchii (Emerald rockcod)).